The chain runs to 386 residues: Acetate kinase (386 aa).

N9 is a Mg(2+) binding site. K16 provides a ligand contact to ATP. R74 serves as a coordination point for substrate. D131 serves as the catalytic Proton donor/acceptor. ATP contacts are provided by residues 191-195 (HLGNG), 265-267 (DFR), and 313-317 (GVGEN). E367 provides a ligand contact to Mg(2+).

Belongs to the acetokinase family. As to quaternary structure, homodimer. Requires Mg(2+) as cofactor. The cofactor is Mn(2+).

It is found in the cytoplasm. It carries out the reaction acetate + ATP = acetyl phosphate + ADP. The protein operates within metabolic intermediate biosynthesis; acetyl-CoA biosynthesis; acetyl-CoA from acetate: step 1/2. Catalyzes the formation of acetyl phosphate from acetate and ATP. Can also catalyze the reverse reaction. The chain is Acetate kinase from Mycolicibacterium gilvum (strain PYR-GCK) (Mycobacterium gilvum (strain PYR-GCK)).